Reading from the N-terminus, the 248-residue chain is Serine/arginine-rich splicing factor 1 (248 aa).

Serine 2 is modified (N-acetylserine). Serine 2 carries the post-translational modification Phosphoserine. Positions 16 to 91 (CRIYVGNLPP…YRLRVEFPRS (76 aa)) constitute an RRM 1 domain. Residue lysine 30 forms a Glycyl lysine isopeptide (Lys-Gly) (interchain with G-Cter in SUMO2) linkage. N6-acetyllysine; alternate is present on lysine 38. A Glycyl lysine isopeptide (Lys-Gly) (interchain with G-Cter in SUMO2); alternate cross-link involves residue lysine 38. The disordered stretch occupies residues 88–134 (FPRSGRGTGRGGGGGGGGGAPRGRYGPPSRRSENRVVVSGLPPSGSW). Arginine 93, arginine 97, and arginine 109 each carry asymmetric dimethylarginine; alternate. 3 positions are modified to omega-N-methylarginine; alternate: arginine 93, arginine 97, and arginine 109. Residues 93–108 (RGTGRGGGGGGGGGAP) show a composition bias toward gly residues. Arginine 111 is modified (omega-N-methylarginine). Residues 121 to 195 (NRVVVSGLPP…ETAYIRVKVD (75 aa)) form the RRM 2 domain. Serine 133 carries the phosphoserine modification. The residue at position 179 (lysine 179) is an N6-acetyllysine. Residues 191 to 248 (RVKVDGPRSPSYGRSRSRSRSRSRNRSRSNSRSRSYSPRRSRGSPRYSPRHSRSRSRT) are disordered. The interaction with SAFB1 stretch occupies residues 198–247 (RSPSYGRSRSRSRSRSRNRSRSNSRSRSYSPRRSRGSPRYSPRHSRSRSR). Residues serine 199 and serine 201 each carry the phosphoserine modification. Position 202 is a phosphotyrosine (tyrosine 202). Phosphoserine is present on residues serine 205, serine 207, serine 209, serine 231, serine 234, and serine 238. Positions 205–248 (SRSRSRSRSRNRSRSNSRSRSYSPRRSRGSPRYSPRHSRSRSRT) are enriched in basic residues.

The protein belongs to the splicing factor SR family. Consists of two polypeptides of p32 and p33. Identified in the spliceosome C complex. Component of a ribonucleoprotein complex containing mRNAs and RNA-binding proteins including DDX5, HNRNPH2 and SRSF1 as well as splicing regulator ARVCF. In vitro, self-associates and binds SRSF2, SNRNP70 and U2AF1 but not U2AF2. Binds SREK1/SFRS12. Interacts with SAFB/SAFB1. Interacts with PSIP1/LEDGF. Interacts with RSRC1 (via Arg/Ser-rich domain). Interacts with ZRSR2/U2AF1-RS2. Interacts with CCDC55 (via C-terminus). Interacts with SRPK1 and a sliding docking interaction is essential for its sequential and processive phosphorylation by SRPK1. Interacts with NXF1. Interacts with CCNL1, CCNL2 and CDK11B. Interacts with RRP1B. Interacts (when phosphorylated in its RS domain) with TNPO3; promoting nuclear import. Interacts with ILDR1 (via C-terminus) and ILDR2. In terms of processing, phosphorylated by CLK1, CLK2, CLK3 and CLK4. Phosphorylated by SRPK1 at multiple serines in its RS domain via a directional (C-terminal to N-terminal) and a dual-track mechanism incorporating both processive phosphorylation (in which the kinase stays attached to the substrate after each round of phosphorylation) and distributive phosphorylation steps (in which the kinase and substrate dissociate after each phosphorylation event). The RS domain of SRSF1 binds to a docking groove in the large lobe of the kinase domain of SRPK1 and this induces certain structural changes in SRPK1 and/or RRM 2 domain of SRSF1, allowing RRM 2 to bind the kinase and initiate phosphorylation. The cycles continue for several phosphorylation steps in a processive manner (steps 1-8) until the last few phosphorylation steps (approximately steps 9-12). During that time, a mechanical stress induces the unfolding of the beta-4 motif in RRM 2, which then docks at the docking groove of SRPK1. This also signals RRM 2 to begin to dissociate, which facilitates SRSF1 dissociation after phosphorylation is completed. Asymmetrically dimethylated at arginines, probably by PRMT1, methylation promotes localization to nuclear speckles.

It is found in the cytoplasm. The protein resides in the nucleus speckle. Functionally, plays a role in preventing exon skipping, ensuring the accuracy of splicing and regulating alternative splicing. Interacts with other spliceosomal components, via the RS domains, to form a bridge between the 5'- and 3'-splice site binding components, U1 snRNP and U2AF. Can stimulate binding of U1 snRNP to a 5'-splice site-containing pre-mRNA. Binds to purine-rich RNA sequences, either the octamer, 5'-RGAAGAAC-3' (r=A or G) or the decamers, AGGACAGAGC/AGGACGAAGC. Binds preferentially to the 5'-CGAGGCG-3' motif in vitro. Three copies of the octamer constitute a powerful splicing enhancer in vitro, the ASF/SF2 splicing enhancer (ASE) which can specifically activate ASE-dependent splicing. May function as export adapter involved in mRNA nuclear export through the TAP/NXF1 pathway. The polypeptide is Serine/arginine-rich splicing factor 1 (SRSF1) (Pongo abelii (Sumatran orangutan)).